We begin with the raw amino-acid sequence, 292 residues long: Bifunctional protein FolD 2 (292 aa).

NADP(+)-binding positions include 166–168 (GHS) and Ile232.

The protein belongs to the tetrahydrofolate dehydrogenase/cyclohydrolase family. As to quaternary structure, homodimer.

It carries out the reaction (6R)-5,10-methylene-5,6,7,8-tetrahydrofolate + NADP(+) = (6R)-5,10-methenyltetrahydrofolate + NADPH. The enzyme catalyses (6R)-5,10-methenyltetrahydrofolate + H2O = (6R)-10-formyltetrahydrofolate + H(+). The protein operates within one-carbon metabolism; tetrahydrofolate interconversion. Its function is as follows. Catalyzes the oxidation of 5,10-methylenetetrahydrofolate to 5,10-methenyltetrahydrofolate and then the hydrolysis of 5,10-methenyltetrahydrofolate to 10-formyltetrahydrofolate. The protein is Bifunctional protein FolD 2 of Ruegeria pomeroyi (strain ATCC 700808 / DSM 15171 / DSS-3) (Silicibacter pomeroyi).